The sequence spans 456 residues: Bifunctional protein GlmU (456 aa).

The tract at residues 1–228 (MPQNTLNIVI…SHLAAGVNNK (228 aa)) is pyrophosphorylase. UDP-N-acetyl-alpha-D-glucosamine is bound by residues 11–14 (LAAG), K25, Q75, 80–81 (GT), 102–104 (YGD), G138, E153, N168, and N226. D104 lines the Mg(2+) pocket. Residue N226 coordinates Mg(2+). The tract at residues 229 to 249 (LQLAELERIFQTGQAQELLKA) is linker. The N-acetyltransferase stretch occupies residues 250 to 456 (GVTLHDPARF…GWVRPEKDKQ (207 aa)). UDP-N-acetyl-alpha-D-glucosamine contacts are provided by R332 and K350. The Proton acceptor role is filled by H362. Residues Y365 and N376 each contribute to the UDP-N-acetyl-alpha-D-glucosamine site. Acetyl-CoA contacts are provided by residues A379, 385–386 (NY), S404, A422, and R439.

It in the N-terminal section; belongs to the N-acetylglucosamine-1-phosphate uridyltransferase family. In the C-terminal section; belongs to the transferase hexapeptide repeat family. Homotrimer. Mg(2+) is required as a cofactor.

It is found in the cytoplasm. It carries out the reaction alpha-D-glucosamine 1-phosphate + acetyl-CoA = N-acetyl-alpha-D-glucosamine 1-phosphate + CoA + H(+). The catalysed reaction is N-acetyl-alpha-D-glucosamine 1-phosphate + UTP + H(+) = UDP-N-acetyl-alpha-D-glucosamine + diphosphate. The protein operates within nucleotide-sugar biosynthesis; UDP-N-acetyl-alpha-D-glucosamine biosynthesis; N-acetyl-alpha-D-glucosamine 1-phosphate from alpha-D-glucosamine 6-phosphate (route II): step 2/2. It participates in nucleotide-sugar biosynthesis; UDP-N-acetyl-alpha-D-glucosamine biosynthesis; UDP-N-acetyl-alpha-D-glucosamine from N-acetyl-alpha-D-glucosamine 1-phosphate: step 1/1. It functions in the pathway bacterial outer membrane biogenesis; LPS lipid A biosynthesis. In terms of biological role, catalyzes the last two sequential reactions in the de novo biosynthetic pathway for UDP-N-acetylglucosamine (UDP-GlcNAc). The C-terminal domain catalyzes the transfer of acetyl group from acetyl coenzyme A to glucosamine-1-phosphate (GlcN-1-P) to produce N-acetylglucosamine-1-phosphate (GlcNAc-1-P), which is converted into UDP-GlcNAc by the transfer of uridine 5-monophosphate (from uridine 5-triphosphate), a reaction catalyzed by the N-terminal domain. The polypeptide is Bifunctional protein GlmU (Neisseria meningitidis serogroup C (strain 053442)).